We begin with the raw amino-acid sequence, 532 residues long: Membrane protein insertase YidC (532 aa).

A run of 5 helical transmembrane segments spans residues 7 to 27, 336 to 356, 413 to 433, 450 to 470, and 492 to 512; these read FFIF…QSQM, LTIL…ITFI, GGFL…YMLI, LSSQ…MFFI, and PVIF…YYII.

The protein belongs to the OXA1/ALB3/YidC family. Type 1 subfamily. As to quaternary structure, interacts with the Sec translocase complex via SecD. Specifically interacts with transmembrane segments of nascent integral membrane proteins during membrane integration.

The protein localises to the cell membrane. Its function is as follows. Required for the insertion and/or proper folding and/or complex formation of integral membrane proteins into the membrane. Involved in integration of membrane proteins that insert both dependently and independently of the Sec translocase complex, as well as at least some lipoproteins. Aids folding of multispanning membrane proteins. The protein is Membrane protein insertase YidC of Buchnera aphidicola subsp. Acyrthosiphon pisum (strain APS) (Acyrthosiphon pisum symbiotic bacterium).